A 597-amino-acid chain; its full sequence is Kelch-like protein 21 (597 aa).

Residues 35–103 (LDVTLEAAGG…SYTGRVAVSG (69 aa)) enclose the BTB domain. One can recognise a BACK domain in the interval 138–239 (CLDMQDFAEA…RRFYLLAHVE (102 aa)). Kelch repeat units follow at residues 287–335 (ILVL…ALGN), 336–382 (DIYV…VLDG), 384–422 (LYVVAADSTERYDHTTDSWEALQPMTYPMDNCSTTACRG), 423–470 (RLYA…TLNG), 472–512 (MYFV…VLGG), and 513–560 (KLYV…SIFR). The interval 570–597 (GRGFELDSGSDDMDPGRPRPPRDPDELH) is disordered. Basic and acidic residues predominate over residues 583–597 (DPGRPRPPRDPDELH).

As to quaternary structure, component of the BCR(KLHL21) E3 ubiquitin ligase complex, at least composed of CUL3, KLHL21 and RBX1.

The protein resides in the cytoplasm. The protein localises to the cytoskeleton. It localises to the spindle. It participates in protein modification; protein ubiquitination. In terms of biological role, substrate-specific adapter of a BCR (BTB-CUL3-RBX1) E3 ubiquitin-protein ligase complex required for efficient chromosome alignment and cytokinesis. The BCR(KLHL21) E3 ubiquitin ligase complex regulates localization of the chromosomal passenger complex (CPC) from chromosomes to the spindle midzone in anaphase and mediates the ubiquitination of AURKB. Ubiquitination of AURKB by BCR(KLHL21) E3 ubiquitin ligase complex may not lead to its degradation by the proteasome. The polypeptide is Kelch-like protein 21 (KLHL21) (Homo sapiens (Human)).